Reading from the N-terminus, the 148-residue chain is Succinate dehydrogenase assembly factor 3, mitochondrial (148 aa).

A mitochondrion-targeting transit peptide spans 1–12 (MYALRPTLRRSA). Residues 129–148 (RGTEGDLEDGDGGESGQKSQ) are disordered.

Belongs to the complex I LYR family. SDHAF3 subfamily. Interacts with the iron-sulfur protein subunit within the SDH catalytic dimer.

The protein resides in the mitochondrion matrix. Functionally, plays an essential role in the assembly of succinate dehydrogenase (SDH), an enzyme complex (also referred to as respiratory complex II) that is a component of both the tricarboxylic acid (TCA) cycle and the mitochondrial electron transport chain, and which couples the oxidation of succinate to fumarate with the reduction of ubiquinone (coenzyme Q) to ubiquinol. Promotes maturation of the iron-sulfur protein subunit of the SDH catalytic dimer, protecting it from the deleterious effects of oxidants. May act together with SDHAF1. This Neurospora crassa (strain ATCC 24698 / 74-OR23-1A / CBS 708.71 / DSM 1257 / FGSC 987) protein is Succinate dehydrogenase assembly factor 3, mitochondrial.